We begin with the raw amino-acid sequence, 338 residues long: Phosphatidylglycerol--prolipoprotein diacylglyceryl transferase (338 aa).

A run of 4 helical transmembrane segments spans residues 24-44 (WYGLMYLVAFGIAYFLFSYQV), 67-87 (LFIWGILGLILGARIFGTLVY), 115-135 (GFQGMSYHGGFIGGFLGVILW), and 141-161 (FKFAAVADLMAVSIPLGYTFG). An a 1,2-diacyl-sn-glycero-3-phospho-(1'-sn-glycerol)-binding site is contributed by arginine 162. 3 helical membrane-spanning segments follow: residues 224-244 (PSQLYEAFFEGIILWLILWLL), 252-272 (GFLVCVYTLGYGFFRFFIEYF), and 304-324 (GQILCSLMILASLAAMLILYL).

Belongs to the Lgt family.

It is found in the cell inner membrane. It catalyses the reaction L-cysteinyl-[prolipoprotein] + a 1,2-diacyl-sn-glycero-3-phospho-(1'-sn-glycerol) = an S-1,2-diacyl-sn-glyceryl-L-cysteinyl-[prolipoprotein] + sn-glycerol 1-phosphate + H(+). Its pathway is protein modification; lipoprotein biosynthesis (diacylglyceryl transfer). Catalyzes the transfer of the diacylglyceryl group from phosphatidylglycerol to the sulfhydryl group of the N-terminal cysteine of a prolipoprotein, the first step in the formation of mature lipoproteins. The chain is Phosphatidylglycerol--prolipoprotein diacylglyceryl transferase from Treponema denticola (strain ATCC 35405 / DSM 14222 / CIP 103919 / JCM 8153 / KCTC 15104).